Consider the following 353-residue polypeptide: N-terminal EF-hand calcium-binding protein 3 (353 aa).

In terms of domain architecture, EF-hand spans 27 to 62; the sequence is AGHALFQDVFRRADKNDDGKLSFEEFQNYFADGVLS. Ca(2+)-binding residues include Asp40, Asn42, Asp44, Lys46, and Glu51. Positions 172 to 181 are required for interaction with APBA3; that stretch reads IKAQSRPCGS. Residues 193 to 203 show a composition bias toward low complexity; it reads SWSPSWSPGSS. Positions 193–213 are disordered; that stretch reads SWSPSWSPGSSDTGRSSEAEQ. A compositionally biased stretch (polar residues) spans 204 to 213; sequence DTGRSSEAEQ. The 90-residue stretch at 253–342 folds into the ABM domain; sequence LVAQRQVQVA…QAPDTLTTVF (90 aa).

Interacts with the N-terminal domain of APBA2. Interacts with NEK2. Interacts with APBA3; APBA3 seems to mediate the interaction between NECAB3 and HIF1AN. Post-translationally, phosphorylated by NEK2. As to expression, widely expressed, with highest levels in the brain.

It localises to the golgi apparatus. Its function is as follows. Inhibits the interaction of APBA2 with amyloid-beta precursor protein (APP), and hence allows formation of amyloid-beta. May enhance the activity of HIF1A and thus promote glycolysis under normoxic conditions; the function requires its ABM domain and may implicate the stabilization of the interaction between HIF1AN and APBA3. The sequence is that of N-terminal EF-hand calcium-binding protein 3 (Necab3) from Mus musculus (Mouse).